A 171-amino-acid chain; its full sequence is LIM domain transcription factor LMO4-B (171 aa).

The span at 1–19 shows a compositional bias: polar residues; sequence MVNNRISESTTTAVSNNGS. Positions 1–20 are disordered; sequence MVNNRISESTTTAVSNNGSP. LIM zinc-binding domains follow at residues 22 to 84 and 86 to 148; these read KACA…LFGN and GACN…GLLN.

Acts as a positive cofactor of GATA transcription factors to establish the identity of the ventral mesoderm during gastrulation. Down-regulation in the dorsal mesoderm is necessary for the proper formation of this territory since, when present, lmo4 may bind ldb1 and restrict the availability of this cofactor for Spemman organizer transcription factors. At neurula stages, suppresses primary neuron differentiation and modulates gene expression at the Isthmic Organizer of the midbrain-hindbrain boundary. The polypeptide is LIM domain transcription factor LMO4-B (lmo4-b) (Xenopus laevis (African clawed frog)).